A 209-amino-acid polypeptide reads, in one-letter code: U1 small nuclear ribonucleoprotein C (209 aa).

A Matrin-type zinc finger spans residues 4–36; the sequence is HYCDYCDVFLTHDSASVRKAHNSGRNHLANVRD. Over residues 72-87 the composition is skewed to low complexity; sequence PQHLQAPPQGGFAPPM. Residues 72-209 form a disordered region; that stretch reads PQHLQAPPQG…RARMMGPGGR (138 aa). Pro residues-rich tracts occupy residues 93–150 and 159–191; these read GGFP…PFPP and PGAP…PTNP.

The protein belongs to the U1 small nuclear ribonucleoprotein C family. U1 snRNP is composed of the 7 core Sm proteins B/B', D1, D2, D3, E, F and G that assemble in a heptameric protein ring on the Sm site of the small nuclear RNA to form the core snRNP, and at least 3 U1 snRNP-specific proteins U1-70K, U1-A and U1-C. U1-C interacts with U1 snRNA and the 5' splice-site region of the pre-mRNA.

The protein localises to the nucleus. In terms of biological role, component of the spliceosomal U1 snRNP, which is essential for recognition of the pre-mRNA 5' splice-site and the subsequent assembly of the spliceosome. U1-C is directly involved in initial 5' splice-site recognition for both constitutive and regulated alternative splicing. The interaction with the 5' splice-site seems to precede base-pairing between the pre-mRNA and the U1 snRNA. Stimulates commitment or early (E) complex formation by stabilizing the base pairing of the 5' end of the U1 snRNA and the 5' splice-site region. This Coprinopsis cinerea (strain Okayama-7 / 130 / ATCC MYA-4618 / FGSC 9003) (Inky cap fungus) protein is U1 small nuclear ribonucleoprotein C.